The chain runs to 457 residues: ATP synthase subunit beta (457 aa).

147-154 (GGAGVGKT) is an ATP binding site.

The protein belongs to the ATPase alpha/beta chains family. F-type ATPases have 2 components, CF(1) - the catalytic core - and CF(0) - the membrane proton channel. CF(1) has five subunits: alpha(3), beta(3), gamma(1), delta(1), epsilon(1). CF(0) has three main subunits: a(1), b(2) and c(9-12). The alpha and beta chains form an alternating ring which encloses part of the gamma chain. CF(1) is attached to CF(0) by a central stalk formed by the gamma and epsilon chains, while a peripheral stalk is formed by the delta and b chains.

The protein localises to the cell inner membrane. It catalyses the reaction ATP + H2O + 4 H(+)(in) = ADP + phosphate + 5 H(+)(out). Produces ATP from ADP in the presence of a proton gradient across the membrane. The catalytic sites are hosted primarily by the beta subunits. The polypeptide is ATP synthase subunit beta (Glaesserella parasuis serovar 5 (strain SH0165) (Haemophilus parasuis)).